Reading from the N-terminus, the 639-residue chain is Bone morphogenetic protein 1 homolog (639 aa).

The signal sequence occupies residues 1–23 (MDLLYYMTVSLLGFILSLTTFIG). A propeptide spanning residues 24–109 (ETTRALSDDV…RAVTARPERR (86 aa)) is cleaved from the precursor. Positions 100-305 (RAVTARPERR…IQANLLYKCP (206 aa)) constitute a Peptidase M12A domain. Residues Asn-122 and Asn-140 are each glycosylated (N-linked (GlcNAc...) asparagine). 6 disulfides stabilise this stretch: Cys-143/Cys-304, Cys-167/Cys-189, Cys-169/Cys-170, Cys-307/Cys-333, Cys-360/Cys-382, and Cys-420/Cys-446. His-197 contributes to the Zn(2+) binding site. Glu-198 is a catalytic residue. Residues His-201 and His-207 each contribute to the Zn(2+) site. 2 consecutive CUB domains span residues 307–419 (CGRT…YEAI) and 420–531 (CGGH…DFFK). Residue Asn-317 is glycosylated (N-linked (GlcNAc...) asparagine). An N-linked (GlcNAc...) asparagine glycan is attached at Asn-455. 4 cysteine pairs are disulfide-bonded: Cys-473-Cys-495, Cys-536-Cys-548, Cys-544-Cys-557, and Cys-559-Cys-572. The region spanning 532 to 573 (EKDECAQPDQGGCMDVCVNTIGSYRCDCRPGYELSSDGRRCE) is the EGF-like; calcium-binding domain.

The cofactor is Zn(2+). In terms of tissue distribution, ectodermal and primary mesenchyme cells in hatched blastula.

The chain is Bone morphogenetic protein 1 homolog from Strongylocentrotus purpuratus (Purple sea urchin).